The chain runs to 247 residues: MIKHIEAFLASKTISENTLKSYRYDLNQFLMLIDHKLSDEKLVLYQKSLNHLSASAKKRKFSTVNQFLHYLYKVNVTDRFFELSGKVSLPSTKVPFTYQLDDKRFYQKTQHPSGQLIALLILELGLLPSELSKLRLSEIDLDFQLIRVDNGSTVKVLSFSQAILKHLSEMEVGSTYLFENKGKPYSRQWFFNQLNAFLLEIGYDQLSAQSLREQFIIREKEKGTSLMELTQKLGLKSPITLEKYYRL.

Residues 1-72 (MIKHIEAFLA…TVNQFLHYLY (72 aa)) form the Core-binding (CB) domain. The Tyr recombinase domain occupies 91–247 (STKVPFTYQL…PITLEKYYRL (157 aa)). The active site involves R212. The active-site O-(3'-phospho-DNA)-tyrosine intermediate is Y244.

It belongs to the 'phage' integrase family. XerD-like subfamily.

Its subcellular location is the cytoplasm. Putative tyrosine recombinase. Not involved in the cutting and rejoining of the recombining DNA molecules on dif(SL) site. This chain is Tyrosine recombinase XerD-like, found in Streptococcus uberis (strain ATCC BAA-854 / 0140J).